A 228-amino-acid polypeptide reads, in one-letter code: Ribulose-phosphate 3-epimerase (228 aa).

Serine 9 serves as a coordination point for substrate. 4 residues coordinate a divalent metal cation: histidine 34, aspartate 36, histidine 68, and aspartate 177. Residue aspartate 36 is the Proton acceptor of the active site. Substrate-binding positions include histidine 68, 177–179, and 199–200; these read DGG and GS. Catalysis depends on aspartate 177, which acts as the Proton donor.

This sequence belongs to the ribulose-phosphate 3-epimerase family. A divalent metal cation serves as cofactor.

The catalysed reaction is D-ribulose 5-phosphate = D-xylulose 5-phosphate. It functions in the pathway carbohydrate degradation. In terms of biological role, catalyzes the reversible epimerization of D-ribulose 5-phosphate to D-xylulose 5-phosphate. The protein is Ribulose-phosphate 3-epimerase of Buchnera aphidicola subsp. Schizaphis graminum (strain Sg).